Consider the following 599-residue polypeptide: Proline dehydrogenase 1, mitochondrial (599 aa).

Disordered stretches follow at residues Ser-20 to Cys-39 and Glu-152 to Tyr-180. Low complexity predominate over residues Pro-23–Cys-39. Basic and acidic residues predominate over residues Glu-153–Tyr-180. 3 positions are modified to N6-acetyllysine: Lys-356, Lys-367, and Lys-485.

The protein belongs to the proline oxidase family. FAD is required as a cofactor. As to expression, expressed in liver, kidney, heart and to a lesser extent in brain, lung and muscle.

The protein resides in the mitochondrion matrix. The enzyme catalyses L-proline + a quinone = (S)-1-pyrroline-5-carboxylate + a quinol + H(+). It participates in amino-acid degradation; L-proline degradation into L-glutamate; L-glutamate from L-proline: step 1/2. Converts proline to delta-1-pyrroline-5-carboxylate. The sequence is that of Proline dehydrogenase 1, mitochondrial (Prodh) from Mus musculus (Mouse).